The sequence spans 155 residues: Peptide deformylase 2 (155 aa).

2 residues coordinate Fe cation: Cys90 and His132. Glu133 is an active-site residue. Residue His136 coordinates Fe cation.

This sequence belongs to the polypeptide deformylase family. It depends on Fe(2+) as a cofactor.

The enzyme catalyses N-terminal N-formyl-L-methionyl-[peptide] + H2O = N-terminal L-methionyl-[peptide] + formate. In terms of biological role, removes the formyl group from the N-terminal Met of newly synthesized proteins. Requires at least a dipeptide for an efficient rate of reaction. N-terminal L-methionine is a prerequisite for activity but the enzyme has broad specificity at other positions. The protein is Peptide deformylase 2 of Clostridium perfringens (strain 13 / Type A).